The sequence spans 276 residues: Prohibitin 1 (276 aa).

It belongs to the prohibitin family.

Functionally, required for larval metabolism or for the progression of the larva into a pupa. This Drosophila melanogaster (Fruit fly) protein is Prohibitin 1.